Here is a 327-residue protein sequence, read N- to C-terminus: GTPase Obg (327 aa).

The 159-residue stretch at 1–159 (MQFIDQANII…WEVQLELKLL (159 aa)) folds into the Obg domain. One can recognise an OBG-type G domain in the interval 160–327 (AEVGIIGLPN…SLLSEVWKRI (168 aa)). ATP contacts are provided by residues 166 to 173 (GLPNAGKS), 191 to 195 (FTTLI), 213 to 216 (DIPG), 280 to 283 (NKME), and 309 to 311 (SSS). Mg(2+)-binding residues include S173 and T193.

The protein belongs to the TRAFAC class OBG-HflX-like GTPase superfamily. OBG GTPase family. As to quaternary structure, monomer. The cofactor is Mg(2+).

The protein resides in the cytoplasm. Its function is as follows. An essential GTPase which binds GTP, GDP and possibly (p)ppGpp with moderate affinity, with high nucleotide exchange rates and a fairly low GTP hydrolysis rate. Plays a role in control of the cell cycle, stress response, ribosome biogenesis and in those bacteria that undergo differentiation, in morphogenesis control. This chain is GTPase Obg, found in Prochlorococcus marinus (strain MIT 9301).